Consider the following 276-residue polypeptide: Bifunctional protein FolD 1 (276 aa).

NADP(+) is bound by residues 161–163, serine 186, and threonine 227; that span reads GRG.

Belongs to the tetrahydrofolate dehydrogenase/cyclohydrolase family. As to quaternary structure, homodimer.

The enzyme catalyses (6R)-5,10-methylene-5,6,7,8-tetrahydrofolate + NADP(+) = (6R)-5,10-methenyltetrahydrofolate + NADPH. The catalysed reaction is (6R)-5,10-methenyltetrahydrofolate + H2O = (6R)-10-formyltetrahydrofolate + H(+). It participates in one-carbon metabolism; tetrahydrofolate interconversion. Catalyzes the oxidation of 5,10-methylenetetrahydrofolate to 5,10-methenyltetrahydrofolate and then the hydrolysis of 5,10-methenyltetrahydrofolate to 10-formyltetrahydrofolate. The chain is Bifunctional protein FolD 1 from Frankia casuarinae (strain DSM 45818 / CECT 9043 / HFP020203 / CcI3).